The sequence spans 144 residues: Large ribosomal subunit protein uL15 (144 aa).

The tract at residues 1 to 52 is disordered; that stretch reads MIKLESLQDPSPRKRRKKLLGRGPGSGHGKTSGRGHKGDGSRSGYKRRFGYE. The segment covering 22-32 has biased composition (gly residues); that stretch reads RGPGSGHGKTS.

It belongs to the universal ribosomal protein uL15 family. In terms of assembly, part of the 50S ribosomal subunit.

Functionally, binds to the 23S rRNA. The polypeptide is Large ribosomal subunit protein uL15 (Chlamydia felis (strain Fe/C-56) (Chlamydophila felis)).